The sequence spans 341 residues: Glycerol-3-phosphate dehydrogenase [NAD(P)+] (341 aa).

Positions 11, 12, 32, and 106 each coordinate NADPH. Sn-glycerol 3-phosphate is bound by residues lysine 106, glycine 137, and threonine 139. Position 141 (alanine 141) interacts with NADPH. Sn-glycerol 3-phosphate is bound by residues lysine 192, aspartate 245, serine 255, arginine 256, and asparagine 257. Lysine 192 acts as the Proton acceptor in catalysis. Arginine 256 is an NADPH binding site. NADPH is bound by residues valine 280 and glutamate 282.

The protein belongs to the NAD-dependent glycerol-3-phosphate dehydrogenase family.

The protein resides in the cytoplasm. It carries out the reaction sn-glycerol 3-phosphate + NAD(+) = dihydroxyacetone phosphate + NADH + H(+). The enzyme catalyses sn-glycerol 3-phosphate + NADP(+) = dihydroxyacetone phosphate + NADPH + H(+). It functions in the pathway membrane lipid metabolism; glycerophospholipid metabolism. Functionally, catalyzes the reduction of the glycolytic intermediate dihydroxyacetone phosphate (DHAP) to sn-glycerol 3-phosphate (G3P), the key precursor for phospholipid synthesis. The polypeptide is Glycerol-3-phosphate dehydrogenase [NAD(P)+] (Exiguobacterium sp. (strain ATCC BAA-1283 / AT1b)).